Consider the following 192-residue polypeptide: SRP-independent targeting protein 2 homolog (192 aa).

The next 2 membrane-spanning stretches (helical) occupy residues Ile-16–Phe-36 and Trp-102–Val-122. Positions Leu-149–Pro-192 are disordered. Over residues Gln-151–His-167 the composition is skewed to low complexity. The segment covering Arg-178–Pro-192 has biased composition (basic residues).

Belongs to the TMEM208 family.

It is found in the endoplasmic reticulum membrane. In terms of biological role, may function in a SRP (signal recognition particle) and GET (guided entry of tail-anchored proteins) independent pathway for targeting a broad range of substrate proteins to the endoplasmic reticulum. Has a role in meiosis. The polypeptide is SRP-independent targeting protein 2 homolog (Schizosaccharomyces pombe (strain 972 / ATCC 24843) (Fission yeast)).